The primary structure comprises 285 residues: 2-dehydro-3-deoxyphosphooctonate aldolase (285 aa).

Belongs to the KdsA family.

Its subcellular location is the cytoplasm. It catalyses the reaction D-arabinose 5-phosphate + phosphoenolpyruvate + H2O = 3-deoxy-alpha-D-manno-2-octulosonate-8-phosphate + phosphate. It participates in carbohydrate biosynthesis; 3-deoxy-D-manno-octulosonate biosynthesis; 3-deoxy-D-manno-octulosonate from D-ribulose 5-phosphate: step 2/3. The protein operates within bacterial outer membrane biogenesis; lipopolysaccharide biosynthesis. This is 2-dehydro-3-deoxyphosphooctonate aldolase from Acinetobacter baumannii (strain SDF).